A 264-amino-acid polypeptide reads, in one-letter code: Eukaryotic translation initiation factor 6 (264 aa).

It belongs to the eIF-6 family. Monomer. Associates with the 60S ribosomal subunit.

It localises to the cytoplasm. It is found in the nucleus. The protein resides in the nucleolus. Binds to the 60S ribosomal subunit and prevents its association with the 40S ribosomal subunit to form the 80S initiation complex in the cytoplasm. May also be involved in ribosome biogenesis. The protein is Eukaryotic translation initiation factor 6 of Toxoplasma gondii (strain ATCC 50861 / VEG).